The sequence spans 299 residues: Dihydroorotate dehydrogenase B (NAD(+)), catalytic subunit (299 aa).

Residues Ser-21 and 44–45 (KS) each bind FMN. Residues Lys-44, 68-72 (NAVGL), and Asn-125 each bind substrate. Asn-125 contacts FMN. Catalysis depends on Cys-128, which acts as the Nucleophile. An FMN-binding site is contributed by Lys-163. 189 to 190 (NT) is a substrate binding site. Residues Gly-214, 240–241 (GG), and 262–263 (GS) contribute to the FMN site.

Belongs to the dihydroorotate dehydrogenase family. Type 1 subfamily. As to quaternary structure, heterotetramer of 2 PyrK and 2 PyrD type B subunits. It depends on FMN as a cofactor.

The protein resides in the cytoplasm. It carries out the reaction (S)-dihydroorotate + NAD(+) = orotate + NADH + H(+). It participates in pyrimidine metabolism; UMP biosynthesis via de novo pathway; orotate from (S)-dihydroorotate (NAD(+) route): step 1/1. In terms of biological role, catalyzes the conversion of dihydroorotate to orotate with NAD(+) as electron acceptor. This is Dihydroorotate dehydrogenase B (NAD(+)), catalytic subunit (pyrD) from Archaeoglobus fulgidus (strain ATCC 49558 / DSM 4304 / JCM 9628 / NBRC 100126 / VC-16).